The sequence spans 494 residues: Probable malate:quinone oxidoreductase (494 aa).

This sequence belongs to the MQO family. The cofactor is FAD.

The enzyme catalyses (S)-malate + a quinone = a quinol + oxaloacetate. It functions in the pathway carbohydrate metabolism; tricarboxylic acid cycle; oxaloacetate from (S)-malate (quinone route): step 1/1. This is Probable malate:quinone oxidoreductase from Micrococcus luteus (strain ATCC 4698 / DSM 20030 / JCM 1464 / CCM 169 / CCUG 5858 / IAM 1056 / NBRC 3333 / NCIMB 9278 / NCTC 2665 / VKM Ac-2230) (Micrococcus lysodeikticus).